We begin with the raw amino-acid sequence, 295 residues long: Zinc finger transcription factor pqm-1 (295 aa).

The disordered stretch occupies residues 1–23 (MSFLNNDFGSPPATSSPPTTMPK). A compositionally biased stretch (low complexity) spans 10 to 22 (SPPATSSPPTTMP). Residues 161–183 (YMCTVCRKVYGRYNSVSYHVTIY) form a C2H2-type 1; degenerate zinc finger. The segment at 227–249 (RKCPHCRHVSKSPAMLEKHIRRH) adopts a C2H2-type 2 zinc-finger fold.

Belongs to the krueppel C2H2-type zinc-finger protein family. Interacts with ceh-60.

The protein localises to the chromosome. It localises to the nucleus. Its subcellular location is the cytoplasm. In terms of biological role, zinc finger transcription factor which acts as both a transcriptional activator and repressor. Binds to the promoters of genes that contain the 5'-CTTATCA-3' DNA consensus sequence in their regulatory region. Functions downstream of the Insulin/IGF-1-like signaling (IIS) mediated pathway. Involved in normal development, lifespan, stress response, lipid metabolism, innate immunity and exit from the developmentally arrested larval state known as dauer. Required for stress-induced expression of hsp-90 and resistance to heat stress, perhaps as part of a systemic stress signaling pathway. Involved in maintenance of proteostasis. Under hypoxic stress increases lipid levels by positively regulating fatty acid synthesis via fat-7 expression. Associates with homeobox protein ceh-60 at the promoters of some stress-responsive genes to regulate expression; may require phosphorylation for transcriptional repression activity. Acts downstream of nhr-14 to activate transcription of intestinal metal transporter smf-3, modulating innate immunity and iron uptake. May act downstream of the mTORC2 signaling mediated pathway. May act in a mutually exclusive manner with the FOXO transcription factor daf-16. The sequence is that of Zinc finger transcription factor pqm-1 from Caenorhabditis elegans.